The following is a 150-amino-acid chain: Ribosomal RNA large subunit methyltransferase H (150 aa).

S-adenosyl-L-methionine contacts are provided by residues alanine 100 and 118-123 (LSEMTF).

Belongs to the RNA methyltransferase RlmH family. Homodimer.

It is found in the cytoplasm. It catalyses the reaction pseudouridine(1915) in 23S rRNA + S-adenosyl-L-methionine = N(3)-methylpseudouridine(1915) in 23S rRNA + S-adenosyl-L-homocysteine + H(+). Its function is as follows. Specifically methylates the pseudouridine at position 1915 (m3Psi1915) in 23S rRNA. The sequence is that of Ribosomal RNA large subunit methyltransferase H from Helicobacter pylori (strain HPAG1).